We begin with the raw amino-acid sequence, 304 residues long: ATP synthase gamma chain (304 aa).

Belongs to the ATPase gamma chain family. F-type ATPases have 2 components, CF(1) - the catalytic core - and CF(0) - the membrane proton channel. CF(1) has five subunits: alpha(3), beta(3), gamma(1), delta(1), epsilon(1). CF(0) has three main subunits: a, b and c.

It localises to the cell membrane. Functionally, produces ATP from ADP in the presence of a proton gradient across the membrane. The gamma chain is believed to be important in regulating ATPase activity and the flow of protons through the CF(0) complex. The chain is ATP synthase gamma chain from Mycobacterium marinum (strain ATCC BAA-535 / M).